Consider the following 228-residue polypeptide: Urease accessory protein UreH (228 aa).

The next 5 helical transmembrane spans lie at 48-68 (VFWG…IILM), 79-99 (SLEF…ILSL), 130-150 (LFIG…LTMS), 162-182 (ILFF…LIGI), and 196-216 (AFIQ…MYNL).

The protein belongs to the NiCoT transporter (TC 2.A.52) family.

It is found in the cell membrane. Probably facilitates nickel incorporation. May constitute a multicomponent high-affinity nickel transporter. Not essential for the expression of catalytically active urease. This is Urease accessory protein UreH (ureH) from Bacillus sp. (strain TB-90).